Reading from the N-terminus, the 222-residue chain is Triosephosphate isomerase (222 aa).

9-11 is a substrate binding site; sequence NYK. H93 acts as the Electrophile in catalysis. E141 (proton acceptor) is an active-site residue. Substrate contacts are provided by residues I146, G181, and 202-203; that span reads AS.

It belongs to the triosephosphate isomerase family. In terms of assembly, homotetramer; dimer of dimers.

It localises to the cytoplasm. It carries out the reaction D-glyceraldehyde 3-phosphate = dihydroxyacetone phosphate. It functions in the pathway carbohydrate biosynthesis; gluconeogenesis. The protein operates within carbohydrate degradation; glycolysis; D-glyceraldehyde 3-phosphate from glycerone phosphate: step 1/1. In terms of biological role, involved in the gluconeogenesis. Catalyzes stereospecifically the conversion of dihydroxyacetone phosphate (DHAP) to D-glyceraldehyde-3-phosphate (G3P). This chain is Triosephosphate isomerase, found in Methanosarcina barkeri (strain Fusaro / DSM 804).